The chain runs to 883 residues: Integrator complex subunit 6 (883 aa).

The region spanning 3–227 is the VWFA domain; sequence ILLFLIDTSA…QCLESLVQKV (225 aa). Positions 625–632 match the Inhibitory loop motif; sequence MMIDEADE. Residues 666–686 are disordered; that stretch reads RRQSPAVNSHIGGKGPPAPMT. Ser800 bears the Phosphoserine mark.

The protein belongs to the Integrator subunit 6 family. In terms of assembly, component of the Integrator complex, composed of core subunits INTS1, INTS2, INTS3, INTS4, INTS5, INTS6, INTS7, INTS8, INTS9/RC74, INTS10, INTS11/CPSF3L, INTS12, INTS13, INTS14 and INTS15. The core complex associates with protein phosphatase 2A subunits PPP2CA and PPP2R1A, to form the Integrator-PP2A (INTAC) complex.

The protein resides in the nucleus. It localises to the chromosome. Component of the integrator complex, a multiprotein complex that terminates RNA polymerase II (Pol II) transcription in the promoter-proximal region of genes. The integrator complex provides a quality checkpoint during transcription elongation by driving premature transcription termination of transcripts that are unfavorably configured for transcriptional elongation: the complex terminates transcription by (1) catalyzing dephosphorylation of the C-terminal domain (CTD) of Pol II subunit POLR2A/RPB1 and SUPT5H/SPT5, (2) degrading the exiting nascent RNA transcript via endonuclease activity and (3) promoting the release of Pol II from bound DNA. The integrator complex is also involved in terminating the synthesis of non-coding Pol II transcripts, such as enhancer RNAs (eRNAs), small nuclear RNAs (snRNAs), telomerase RNAs and long non-coding RNAs (lncRNAs). Within the integrator complex, INTS6 acts as a molecular adapter that promotes assembly of protein phosphatase 2A (PP2A) subunits to the integrator core complex, promoting recruitment of PP2A to transcription pause-release checkpoint. Mediates recruitment of cytoplasmic dynein to the nuclear envelope, probably as component of the integrator complex. This is Integrator complex subunit 6 (Ints6) from Mus musculus (Mouse).